The chain runs to 1462 residues: DNA polymerase III PolC-type (1462 aa).

The Exonuclease domain occupies 424-580; it reads YVVFDVETTG…YDAEATGRLL (157 aa).

It belongs to the DNA polymerase type-C family. PolC subfamily.

The protein resides in the cytoplasm. It carries out the reaction DNA(n) + a 2'-deoxyribonucleoside 5'-triphosphate = DNA(n+1) + diphosphate. Functionally, required for replicative DNA synthesis. This DNA polymerase also exhibits 3' to 5' exonuclease activity. The protein is DNA polymerase III PolC-type of Streptococcus sanguinis (strain SK36).